Reading from the N-terminus, the 352-residue chain is uncharacterized protein (352 aa).

A signal peptide spans 1–21 (MNVDSRVFRFFLVFLILVVVA).

It belongs to the bacterial solute-binding protein 1 family. WtpA subfamily.

This is an uncharacterized protein from Methanosarcina acetivorans (strain ATCC 35395 / DSM 2834 / JCM 12185 / C2A).